Consider the following 71-residue polypeptide: Serine palmitoyltransferase small subunit A (71 aa).

Residues 1-12 (MAGMALARAWKQ) are Cytoplasmic-facing. A helical transmembrane segment spans residues 13–29 (MSWFYYQYLLVTALYML). Residues 30 to 34 (EPWER) are Lumenal-facing. A helical membrane pass occupies residues 35-57 (TVFNSMLVSVVGMALYTGYVFMP). Residues 58-71 (QHIMAILHYFEIVQ) lie on the Cytoplasmic side of the membrane.

It belongs to the SPTSS family. SPTSSA subfamily. As to quaternary structure, component of the serine palmitoyltransferase (SPT) complex, which is composed of SPTLC1, SPTLC2 or SPTLC3 and SPTSSA or SPTSSB. The heterodimer consisting of SPTLC1 and SPTLC2/SPTLC3 forms the catalytic core of the enzyme, while SPTSSA or SPTSSB subunits determine substrate specificity. SPT also interacts with ORMDL proteins, especially ORMDL3, which negatively regulate SPT activity in the presence of ceramides. Interacts with MBOAT7; the interaction plays a role in MBOAT7 localization to mitochondria-associated membranes.

It localises to the endoplasmic reticulum membrane. The protein operates within lipid metabolism; sphingolipid metabolism. In terms of biological role, component of the serine palmitoyltransferase multisubunit enzyme (SPT) that catalyzes the initial and rate-limiting step in sphingolipid biosynthesis by condensing L-serine and activated acyl-CoA (most commonly palmitoyl-CoA) to form long-chain bases. The SPT complex is composed of SPTLC1, SPTLC2 or SPTLC3 and SPTSSA or SPTSSB. Within this complex, the heterodimer consisting of SPTLC1 and SPTLC2/SPTLC3 forms the catalytic core. Within the SPT complex, SPTSSA stimulates the catalytic activity and plays a role in substrate specificity, which depends upon the overall complex composition. The SPTLC1-SPTLC2-SPTSSA complex shows a strong preference for C16-CoA substrate, while the SPTLC1-SPTLC3-SPTSSA isozyme uses both C14-CoA and C16-CoA as substrates, with a slight preference for C14-CoA. Independently of its action as a SPT component, may be involved in MBOAT7 localization to mitochondria-associated membranes, a membrane bridge between the endoplasmic reticulum and mitochondria, may hence affect MBOAT7-catalyzed incorporation of arachidonic acid into phosphatidylinositol. The protein is Serine palmitoyltransferase small subunit A of Mus musculus (Mouse).